The sequence spans 158 residues: 6,7-dimethyl-8-ribityllumazine synthase (158 aa).

5-amino-6-(D-ribitylamino)uracil contacts are provided by residues phenylalanine 24, 58–60 (AFE), and 82–84 (AVI). 87–88 (GT) contributes to the (2S)-2-hydroxy-3-oxobutyl phosphate binding site. Histidine 90 functions as the Proton donor in the catalytic mechanism. Phenylalanine 115 contacts 5-amino-6-(D-ribitylamino)uracil. Residue arginine 129 participates in (2S)-2-hydroxy-3-oxobutyl phosphate binding.

It belongs to the DMRL synthase family. As to quaternary structure, forms an icosahedral capsid composed of 60 subunits, arranged as a dodecamer of pentamers.

It carries out the reaction (2S)-2-hydroxy-3-oxobutyl phosphate + 5-amino-6-(D-ribitylamino)uracil = 6,7-dimethyl-8-(1-D-ribityl)lumazine + phosphate + 2 H2O + H(+). The protein operates within cofactor biosynthesis; riboflavin biosynthesis; riboflavin from 2-hydroxy-3-oxobutyl phosphate and 5-amino-6-(D-ribitylamino)uracil: step 1/2. In terms of biological role, catalyzes the formation of 6,7-dimethyl-8-ribityllumazine by condensation of 5-amino-6-(D-ribitylamino)uracil with 3,4-dihydroxy-2-butanone 4-phosphate. This is the penultimate step in the biosynthesis of riboflavin. The polypeptide is 6,7-dimethyl-8-ribityllumazine synthase (Stutzerimonas stutzeri (strain A1501) (Pseudomonas stutzeri)).